The sequence spans 243 residues: UMP-CMP kinase 1 (243 aa).

An ATP-binding site is contributed by 29–34; that stretch reads GSGKGT. An NMP region spans residues 49–78; the sequence is SAGDLLREEAKYDTEQGTMIKNLMNEGKLV. A ribonucleoside 5'-phosphate-binding positions include arginine 55, 76-78, and 103-106; these read KLV and GFPR. Asparagine 110 contacts CMP. Residues 141–149 form an LID region; sequence NRNQGRDDD. Arginine 142 contributes to the ATP binding site. A ribonucleoside 5'-phosphate-binding residues include arginine 146 and arginine 157. Arginine 185 provides a ligand contact to ATP.

This sequence belongs to the adenylate kinase family. UMP-CMP kinase subfamily. As to quaternary structure, monomer. Mg(2+) serves as cofactor.

Its subcellular location is the cytoplasm. It is found in the nucleus. The catalysed reaction is UMP + ATP = UDP + ADP. The enzyme catalyses CMP + ATP = CDP + ADP. It catalyses the reaction dCMP + ATP = dCDP + ADP. Its function is as follows. Catalyzes the phosphorylation of pyrimidine nucleoside monophosphates at the expense of ATP. Plays an important role in de novo pyrimidine nucleotide biosynthesis. Has preference for UMP and CMP as phosphate acceptors. This is UMP-CMP kinase 1 from Oryza sativa subsp. japonica (Rice).